The following is a 189-amino-acid chain: EIGFTRTLHGVMQNITHLCSRSKSRTWGKDGWKKIVVCIIADGRKKVHPRTLNALAALGVYQEGIAKNVVNQKQVNAHVYEYTTQVSLDPDLKFKGAEKGIMPCQVLFCLKEHNKKKLNSHRWFFNAFGRALQPNICILLDVGTKPAPTALYHLWKAFDQNSNVAGAAGEIKAGKGKGMLGLLNPLVAS.

It belongs to the chitin synthase family. Class II subfamily.

The protein localises to the cell membrane. The enzyme catalyses [(1-&gt;4)-N-acetyl-beta-D-glucosaminyl](n) + UDP-N-acetyl-alpha-D-glucosamine = [(1-&gt;4)-N-acetyl-beta-D-glucosaminyl](n+1) + UDP + H(+). In terms of biological role, polymerizes chitin, a structural polymer of the cell wall and septum, by transferring the sugar moiety of UDP-GlcNAc to the non-reducing end of the growing chitin polymer. The protein is Chitin synthase 2 (chs2) of Aspergillus niger.